The sequence spans 971 residues: Lon protease homolog, mitochondrial (971 aa).

Residues 1 to 55 constitute a mitochondrion transit peptide; that stretch reads MYRAGAVLLRGATRTRLLAAASAHQSFATFSQRNQSILMMKSMELAGNSGERRFY. One can recognise a Lon N-terminal domain in the interval 89–359; it reads VPMLAINRYP…IALLLIQKEK (271 aa). The interval 190-255 is disordered; sequence TPKNETPLNG…PPSATGEKQK (66 aa). The span at 214-224 shows a compositional bias: pro residues; the sequence is LTPPPSPPPLA. 512–519 lines the ATP pocket; that stretch reads GPPGVGKT. The segment at 718 to 749 is disordered; sequence AEQQNEDEEPAEKATTAITENSEAEPITSTSS. Over residues 733–749 the composition is skewed to polar residues; it reads TAITENSEAEPITSTSS. In terms of domain architecture, Lon proteolytic spans 784-971; sequence VTPPGVIMGL…YDELYEHLFQ (188 aa). Active-site residues include Ser878 and Lys921.

Belongs to the peptidase S16 family. Homohexamer or homoheptamer. Organized in a ring with a central cavity.

Its subcellular location is the mitochondrion matrix. The catalysed reaction is Hydrolysis of proteins in presence of ATP.. Its function is as follows. ATP-dependent serine protease that mediates the selective degradation of misfolded, unassembled or oxidatively damaged polypeptides as well as certain short-lived regulatory proteins in the mitochondrial matrix. May also have a chaperone function in the assembly of inner membrane protein complexes. Participates in the regulation of mitochondrial gene expression and in the maintenance of the integrity of the mitochondrial genome. Binds to mitochondrial DNA in a site-specific manner. Involved in the degradation of transcription factor atfs-1 in the mitochondrion. This chain is Lon protease homolog, mitochondrial, found in Caenorhabditis elegans.